A 333-amino-acid polypeptide reads, in one-letter code: Adenosine deaminase (333 aa).

Histidine 12 and histidine 14 together coordinate Zn(2+). Substrate is bound by residues histidine 14, aspartate 16, and glycine 170. Residue histidine 197 participates in Zn(2+) binding. The Proton donor role is filled by glutamate 200. Aspartate 278 contacts Zn(2+). Aspartate 279 serves as a coordination point for substrate.

The protein belongs to the metallo-dependent hydrolases superfamily. Adenosine and AMP deaminases family. Adenosine deaminase subfamily. It depends on Zn(2+) as a cofactor.

The enzyme catalyses adenosine + H2O + H(+) = inosine + NH4(+). The catalysed reaction is 2'-deoxyadenosine + H2O + H(+) = 2'-deoxyinosine + NH4(+). Functionally, catalyzes the hydrolytic deamination of adenosine and 2-deoxyadenosine. The protein is Adenosine deaminase of Aliivibrio fischeri (strain MJ11) (Vibrio fischeri).